Reading from the N-terminus, the 972-residue chain is MPNASPASPLNAPLAELEQRDAFIGRHVGPNATEIATMLAAVGAPDLDTLIDQTVPPAIRLAAPLPLEGPKPEHEALADLRAIAAKNVIRKSLIGMGYYGTHTPAVILRNVMENPGWYTAYTPYQAEIAQGRLEALLNYQQMVIDLTGLELANASLLDEATAAAEAMTMARRVAKSKSNVFYVDEACFPQTIDVLRTRAGLFGFELKFGPAHDAANADAFGALLQYPNERGEIIDLSGTVAALKAKGAVVAIASDLMALVLLKSPGTMGADIALGSAQRFGVPMGFGGPHAAFFATREANVRAMPGRIIGVSKDARGKTALRMTLQTREQHIRREKANSNICTSQVLLANMSGFYAVYHGPQGLRTIAARIHRLAAILAQGLRDAGFNVPAGAFFDTLQVDTGARTAELLAACDAAGFNLRPVSDTVLGLSVDETTTGDDVATLLRLFGASGELAALDAKVGAAGGAIPAALLRDDAILTHPVFNTHHTEHEMLRYLKKLQNRDLALDHSMISLGSCTMKLNATSEMIPITWAEFANLHPFAPREQVRGYLEMIDGLAGYLKAVTGFAAISMQPNSGAQGEYAGLVAIRRYHDSRGDTHRRVCLIPKSAHGTNPASAQMCGMDVVVVACDERGNVDLADLEAKVAQHADRLAALMITYPSTHGVFEESIREICASVHRHGGQVYMDGANLNAQVGLTSPATIGADVSHMNLHKTFCIPHGGGGPGMGPIGLAAHLAPFMADHVVAATGDETRPNKGQGAVSAAPFGSASILPISWMYIAMMGDTGLKLATEVAILNANYVANRLAEHYPVLYTGSQGRVAHECILDIRPIKANTGISEVDIAKRLMDYGFHAPTMSFPVAGTIMIEPTESEDLGELDRFIAAMITIRNEIREVENGAWPTDDNPLKNAPHTQADFIAADGAQWSRPYSREQAVFPLPWVAENKFWPSVNRIDDVYGDRNLFCACVPIEDYAS.

An N6-(pyridoxal phosphate)lysine modification is found at Lys713.

Belongs to the GcvP family. In terms of assembly, the glycine cleavage system is composed of four proteins: P, T, L and H. It depends on pyridoxal 5'-phosphate as a cofactor.

The catalysed reaction is N(6)-[(R)-lipoyl]-L-lysyl-[glycine-cleavage complex H protein] + glycine + H(+) = N(6)-[(R)-S(8)-aminomethyldihydrolipoyl]-L-lysyl-[glycine-cleavage complex H protein] + CO2. The glycine cleavage system catalyzes the degradation of glycine. The P protein binds the alpha-amino group of glycine through its pyridoxal phosphate cofactor; CO(2) is released and the remaining methylamine moiety is then transferred to the lipoamide cofactor of the H protein. This is Glycine dehydrogenase (decarboxylating) from Aromatoleum aromaticum (strain DSM 19018 / LMG 30748 / EbN1) (Azoarcus sp. (strain EbN1)).